We begin with the raw amino-acid sequence, 210 residues long: LexA repressor (210 aa).

The segment at residues 25 to 44 (AGQVAQEVGITKQAISQQVN) is a DNA-binding region (H-T-H motif). Residues Ser120 and Lys159 each act as for autocatalytic cleavage activity in the active site.

This sequence belongs to the peptidase S24 family. In terms of assembly, homodimer.

The catalysed reaction is Hydrolysis of Ala-|-Gly bond in repressor LexA.. In terms of biological role, represses a number of genes involved in the response to DNA damage (SOS response), including recA and lexA. In the presence of single-stranded DNA, RecA interacts with LexA causing an autocatalytic cleavage which disrupts the DNA-binding part of LexA, leading to derepression of the SOS regulon and eventually DNA repair. This is LexA repressor from Deinococcus radiodurans (strain ATCC 13939 / DSM 20539 / JCM 16871 / CCUG 27074 / LMG 4051 / NBRC 15346 / NCIMB 9279 / VKM B-1422 / R1).